We begin with the raw amino-acid sequence, 202 residues long: Inner membrane-spanning protein YciB (202 aa).

Helical transmembrane passes span 3–23, 46–66, 74–94, 100–120, 145–165, and 173–193; these read FFLD…AGAA, ILIA…IVWL, MLWV…VFHN, WKPT…ALLF, LAWI…AYGY, and FKLF…GFYL.

Belongs to the YciB family.

The protein resides in the cell inner membrane. In terms of biological role, plays a role in cell envelope biogenesis, maintenance of cell envelope integrity and membrane homeostasis. This chain is Inner membrane-spanning protein YciB, found in Azoarcus sp. (strain BH72).